Reading from the N-terminus, the 201-residue chain is MRLIAENLGGERGGEAVFSGVGFALDQGQALVVTGPNGSGKSTLLRIIAGLLPKAEGRLLLENGGDDFPSIASACHYLGHQNAMKTALSVVENLRFWRDFNGRGDSGVEEALDTVGLGGVGHLPFGYLSTGQRRRAAIAKLLVSHRPLWLLDEPTAGLDKASEARFAGLMAGHCAGGGMIVAATHLPLGIEGAELRMGVAG.

In terms of domain architecture, ABC transporter spans 3-200; that stretch reads LIAENLGGER…EGAELRMGVA (198 aa). 35 to 42 contributes to the ATP binding site; sequence GPNGSGKS.

Belongs to the ABC transporter superfamily. CcmA exporter (TC 3.A.1.107) family. As to quaternary structure, the complex is composed of two ATP-binding proteins (CcmA) and two transmembrane proteins (CcmB).

It localises to the cell inner membrane. It carries out the reaction heme b(in) + ATP + H2O = heme b(out) + ADP + phosphate + H(+). Its function is as follows. Part of the ABC transporter complex CcmAB involved in the biogenesis of c-type cytochromes; once thought to export heme, this seems not to be the case, but its exact role is uncertain. Responsible for energy coupling to the transport system. The protein is Cytochrome c biogenesis ATP-binding export protein CcmA of Mesorhizobium japonicum (strain LMG 29417 / CECT 9101 / MAFF 303099) (Mesorhizobium loti (strain MAFF 303099)).